Consider the following 683-residue polypeptide: THO complex subunit 5 (683 aa).

The segment at 1-42 (MSSESSKKRKPKVIRSDGAPAEGKRNRSDTEQEGKYYSEEAE) is disordered. Position 2 is an N-acetylserine (S2). An interaction with CSF1R region spans residues 2–144 (SSESSKKRKP…YEVMHLQKEI (143 aa)). Residues 2–199 (SSESSKKRKP…RLDWELEQRK (198 aa)) form an interaction with THOC7 region. Phosphoserine is present on residues S5 and S6. A Nuclear localization signal motif is present at residues 7 to 10 (KKRK). Residues 22–42 (EGKRNRSDTEQEGKYYSEEAE) are compositionally biased toward basic and acidic residues. The stretch at 81–247 (AIEIEERRIQ…QASLPVQEYL (167 aa)) forms a coiled coil. Residue K153 forms a Glycyl lysine isopeptide (Lys-Gly) (interchain with G-Cter in SUMO2) linkage. Y225 is modified (phosphotyrosine; by SRC). A tandem RWD domains region spans residues 247 to 683 (LFMPFDQAHK…NHPQGFFSHR (437 aa)). Positions 301-336 (FKPPEDSQDDESDSDAEEEQTTKRRRPTLGVQLDDK) are disordered. Positions 306–319 (DSQDDESDSDAEEE) are enriched in acidic residues. A phosphoserine mark is found at S307, S312, and S314. Position 328 is a phosphothreonine (T328).

This sequence belongs to the THOC5 family. Component of the THO subcomplex, which is composed of THOC1, THOC2, THOC3, THOC5, THOC6 and THOC7. The THO subcomplex interacts with DDX39B to form the THO-DDX39B complex which multimerizes into a 28-subunit tetrameric assembly. Component of the transcription/export (TREX) complex at least composed of ALYREF/THOC4, DDX39B, SARNP/CIP29, CHTOP and the THO subcomplex; in the complex interacts with THOC1, THOC2, THOC5, THOC6 and THOC7; forms a coiled-coil dimer with THOC7; together with THOC6 and THOC7, plays a key structural role in oligomerization of the THO-DDX39B complex. TREX seems to have a dynamic structure involving ATP-dependent remodeling. Interacts with phosphorylated CSF1R. Interacts (via N-terminus) with the NTF2 domain of NXF1. Forms a complex with CEBPB. Interacts with CPSF6; indicative for an association with the cleavage factor Im (CFIm) complex. Interacts with LUZP4. Interacts with NCBP3. In terms of processing, phosphorylated on tyrosine upon binding to activated CSF1R; which causes a dissociation of the two proteins. Phosphorylation on Ser-5 and/or Ser-6 is required for nuclear export. Phosphorylated on Thr-328 in insulin-stimulated adipocytes. Phosphorylation at Tyr-225 modulates mRNA binding. Ubiquitously expressed.

The protein resides in the nucleus. Its subcellular location is the cytoplasm. Functionally, component of the THO subcomplex of the TREX complex which is thought to couple mRNA transcription, processing and nuclear export, and which specifically associates with spliced mRNA and not with unspliced pre-mRNA. Plays a key structural role in the oligomerization of the THO-DDX39B complex. TREX is recruited to spliced mRNAs by a transcription-independent mechanism, binds to mRNA upstream of the exon-junction complex (EJC) and is recruited in a splicing- and cap-dependent manner to a region near the 5' end of the mRNA where it functions in mRNA export to the cytoplasm via the TAP/NXF1 pathway. THOC5 in conjunction with ALYREF/THOC4 functions in NXF1-NXT1 mediated nuclear export of HSP70 mRNA; both proteins enhance the RNA binding activity of NXF1 and are required for NXF1 localization to the nuclear rim. Involved in transcription elongation and genome stability. Involved in alternative polyadenylation site choice by recruiting CPSF6 to 5' region of target genes; probably mediates association of the TREX and CFIm complexes. Regulates the expression of myeloid transcription factors CEBPA, CEBPB and GAB2 by enhancing the levels of phosphatidylinositol 3,4,5-trisphosphate. May be involved in the differentiation of granulocytes and adipocytes. Essential for hematopoietic primitive cell survival and plays an integral role in monocytic development. Its function is as follows. (Microbial infection) The TREX complex is essential for the export of Kaposi's sarcoma-associated herpesvirus (KSHV) intronless mRNAs and infectious virus production. This Homo sapiens (Human) protein is THO complex subunit 5 (THOC5).